Consider the following 491-residue polypeptide: Tyrosine 3-monooxygenase (491 aa).

A Phosphoserine; by CaMK2 modification is found at Ser19. Ser31 bears the Phosphoserine mark. The residue at position 40 (Ser40) is a Phosphoserine; by CaMK2 and PKA. 3 residues coordinate Fe cation: His324, His329, and Glu369. The residue at position 465 (Ser465) is a Phosphoserine.

Belongs to the biopterin-dependent aromatic amino acid hydroxylase family. As to quaternary structure, homotetramer. Interacts (when phosphorylated at Ser-19) with YWHAG; one YWHAG dimer bounds to one TH tetramer and this interaction may influence the phosphorylation and dephosphorylation of other sites. Interacts with NT5DC2; the interaction results in reduced phosphorylation and decreased catalytic activity of TH. It depends on Fe(2+) as a cofactor. Post-translationally, phosphorylated on Ser-19, Ser-31 and Ser-40 by several protein kinases with different site specificities. Phosphorylation at Ser-31 and Ser-40 leads to an increase of TH activity. Phosphorylation at Ser-40 activates the enzyme and also counteracts the feedback inhibition of TH by catecholamines. Phosphorylation of Ser-19 and Ser-31 triggers the proteasomal degradation of TH through the ubiquitin-proteasome pathway. Phosphorylation at Ser-31 facilitates transport of TH from the soma to the nerve terminals via the microtubule network. Phosphorylation at Ser-19 induces the high-affinity binding to the 14-3-3 protein YWHAG; this interaction may influence the phosphorylation and dephosphorylation of other sites. Ser-19 increases the phosphorylation at Ser-40 in a hierarchical manner, leading to increased activity.

The protein resides in the cytoplasm. Its subcellular location is the perinuclear region. The protein localises to the nucleus. It is found in the cell projection. It localises to the axon. The protein resides in the cytoplasmic vesicle. Its subcellular location is the secretory vesicle. The protein localises to the synaptic vesicle. The enzyme catalyses (6R)-L-erythro-5,6,7,8-tetrahydrobiopterin + L-tyrosine + O2 = (4aS,6R)-4a-hydroxy-L-erythro-5,6,7,8-tetrahydrobiopterin + L-dopa. It participates in catecholamine biosynthesis; dopamine biosynthesis; dopamine from L-tyrosine: step 1/2. With respect to regulation, inhibited in feedback fashion by the catecholamine neurotransmitters, especially by dopamine in competition with tetrahydrobiopterin. Phosphorylation of several Ser/Thr residues in the N-terminus regulates the catalytic activity. Ser-31 and Ser-40 are readily phosphorylated to activate the catalytic activity. A Cysteine modification induced by N-ethylmaleimide (NEM), inhibits tyrosine 3-monooxygenase activity through the modification of the Cys-170. Its function is as follows. Catalyzes the conversion of L-tyrosine to L-dihydroxyphenylalanine (L-Dopa), the rate-limiting step in the biosynthesis of catecholamines, dopamine, noradrenaline, and adrenaline. Uses tetrahydrobiopterin and molecular oxygen to convert tyrosine to L-Dopa. In addition to tyrosine, is able to catalyze the hydroxylation of phenylalanine and tryptophan with lower specificity. Positively regulates the regression of retinal hyaloid vessels during postnatal development. The chain is Tyrosine 3-monooxygenase (TH) from Bos taurus (Bovine).